We begin with the raw amino-acid sequence, 147 residues long: Ribosome maturation factor RimP (147 aa).

The protein belongs to the RimP family.

The protein localises to the cytoplasm. Its function is as follows. Required for maturation of 30S ribosomal subunits. The protein is Ribosome maturation factor RimP of Legionella pneumophila (strain Lens).